We begin with the raw amino-acid sequence, 474 residues long: Aspartate ammonia-lyase (474 aa).

Residues threonine 105, serine 144, threonine 145, asparagine 146, and threonine 191 each coordinate L-aspartate. The segment at 322-331 is SS loop; the sequence is GSSIMPGKVN. Serine 323 functions as the Proton acceptor in the catalytic mechanism. Residues serine 324 and lysine 329 each coordinate L-aspartate.

Belongs to the class-II fumarase/aspartase family. Aspartase subfamily. As to quaternary structure, homotetramer.

The enzyme catalyses L-aspartate = fumarate + NH4(+). It catalyses the reaction L-phenylalanine = (E)-cinnamate + NH4(+). Its activity is regulated as follows. Does not require any divalent metal ion for activation of catalysis, but the activity is slightly increased in the presence of Mg(2+), Mn(2+), Ca(2+) or Co(2+). Functionally, catalyzes the reversible conversion of L-aspartate to fumarate and ammonia. Can also utilize L-phenylalanine to form cinnamic acid. Exhibits the highest specific activity towards L-phenylalanine, but catalytic efficiency is 3-fold higher with L-aspartate. In Pseudomonas aeruginosa (strain ATCC 15692 / DSM 22644 / CIP 104116 / JCM 14847 / LMG 12228 / 1C / PRS 101 / PAO1), this protein is Aspartate ammonia-lyase.